A 196-amino-acid chain; its full sequence is ATP-dependent Clp protease proteolytic subunit (196 aa).

Residue serine 98 is the Nucleophile of the active site. Histidine 123 is a catalytic residue.

The protein belongs to the peptidase S14 family. Fourteen ClpP subunits assemble into 2 heptameric rings which stack back to back to give a disk-like structure with a central cavity, resembling the structure of eukaryotic proteasomes.

The protein resides in the cytoplasm. It carries out the reaction Hydrolysis of proteins to small peptides in the presence of ATP and magnesium. alpha-casein is the usual test substrate. In the absence of ATP, only oligopeptides shorter than five residues are hydrolyzed (such as succinyl-Leu-Tyr-|-NHMec, and Leu-Tyr-Leu-|-Tyr-Trp, in which cleavage of the -Tyr-|-Leu- and -Tyr-|-Trp bonds also occurs).. Cleaves peptides in various proteins in a process that requires ATP hydrolysis. Has a chymotrypsin-like activity. Plays a major role in the degradation of misfolded proteins. This chain is ATP-dependent Clp protease proteolytic subunit, found in Actinobacillus pleuropneumoniae serotype 7 (strain AP76).